Consider the following 485-residue polypeptide: Glutamyl-tRNA(Gln) amidotransferase subunit A (485 aa).

Active-site charge relay system residues include K78 and S153. The active-site Acyl-ester intermediate is S177.

This sequence belongs to the amidase family. GatA subfamily. As to quaternary structure, heterotrimer of A, B and C subunits.

It catalyses the reaction L-glutamyl-tRNA(Gln) + L-glutamine + ATP + H2O = L-glutaminyl-tRNA(Gln) + L-glutamate + ADP + phosphate + H(+). Functionally, allows the formation of correctly charged Gln-tRNA(Gln) through the transamidation of misacylated Glu-tRNA(Gln) in organisms which lack glutaminyl-tRNA synthetase. The reaction takes place in the presence of glutamine and ATP through an activated gamma-phospho-Glu-tRNA(Gln). In Geobacter sulfurreducens (strain ATCC 51573 / DSM 12127 / PCA), this protein is Glutamyl-tRNA(Gln) amidotransferase subunit A.